We begin with the raw amino-acid sequence, 348 residues long: 4-hydroxy-3-methylbut-2-enyl diphosphate reductase (348 aa).

[4Fe-4S] cluster is bound at residue Cys21. The (2E)-4-hydroxy-3-methylbut-2-enyl diphosphate site is built by His50 and His86. Dimethylallyl diphosphate is bound by residues His50 and His86. Isopentenyl diphosphate contacts are provided by His50 and His86. Cys108 contributes to the [4Fe-4S] cluster binding site. Residue His136 participates in (2E)-4-hydroxy-3-methylbut-2-enyl diphosphate binding. His136 is a dimethylallyl diphosphate binding site. An isopentenyl diphosphate-binding site is contributed by His136. Glu138 acts as the Proton donor in catalysis. (2E)-4-hydroxy-3-methylbut-2-enyl diphosphate is bound at residue Thr177. Residue Cys207 participates in [4Fe-4S] cluster binding. (2E)-4-hydroxy-3-methylbut-2-enyl diphosphate contacts are provided by Ser235, Ser236, Asn237, and Ser280. Dimethylallyl diphosphate-binding residues include Ser235, Ser236, Asn237, and Ser280. Residues Ser235, Ser236, Asn237, and Ser280 each contribute to the isopentenyl diphosphate site.

It belongs to the IspH family. It depends on [4Fe-4S] cluster as a cofactor.

The catalysed reaction is isopentenyl diphosphate + 2 oxidized [2Fe-2S]-[ferredoxin] + H2O = (2E)-4-hydroxy-3-methylbut-2-enyl diphosphate + 2 reduced [2Fe-2S]-[ferredoxin] + 2 H(+). It catalyses the reaction dimethylallyl diphosphate + 2 oxidized [2Fe-2S]-[ferredoxin] + H2O = (2E)-4-hydroxy-3-methylbut-2-enyl diphosphate + 2 reduced [2Fe-2S]-[ferredoxin] + 2 H(+). It participates in isoprenoid biosynthesis; dimethylallyl diphosphate biosynthesis; dimethylallyl diphosphate from (2E)-4-hydroxy-3-methylbutenyl diphosphate: step 1/1. Its pathway is isoprenoid biosynthesis; isopentenyl diphosphate biosynthesis via DXP pathway; isopentenyl diphosphate from 1-deoxy-D-xylulose 5-phosphate: step 6/6. Catalyzes the conversion of 1-hydroxy-2-methyl-2-(E)-butenyl 4-diphosphate (HMBPP) into a mixture of isopentenyl diphosphate (IPP) and dimethylallyl diphosphate (DMAPP). Acts in the terminal step of the DOXP/MEP pathway for isoprenoid precursor biosynthesis. The protein is 4-hydroxy-3-methylbut-2-enyl diphosphate reductase of Agrobacterium fabrum (strain C58 / ATCC 33970) (Agrobacterium tumefaciens (strain C58)).